The chain runs to 228 residues: L-ribulose-5-phosphate 4-epimerase UlaF (228 aa).

Substrate-binding positions include 26–27 (GN), 43–44 (SG), and 72–73 (SS). 3 residues coordinate Zn(2+): Asp-74, His-93, and His-95. Catalysis depends on Asp-118, which acts as the Proton donor/acceptor. His-167 contributes to the Zn(2+) binding site. Tyr-225 (proton donor/acceptor) is an active-site residue.

The protein belongs to the aldolase class II family. AraD/FucA subfamily. It depends on Zn(2+) as a cofactor.

The enzyme catalyses L-ribulose 5-phosphate = D-xylulose 5-phosphate. It participates in cofactor degradation; L-ascorbate degradation; D-xylulose 5-phosphate from L-ascorbate: step 4/4. Its function is as follows. Catalyzes the isomerization of L-ribulose 5-phosphate to D-xylulose 5-phosphate. Is involved in the anaerobic L-ascorbate utilization. The chain is L-ribulose-5-phosphate 4-epimerase UlaF from Escherichia coli (strain 55989 / EAEC).